Here is a 146-residue protein sequence, read N- to C-terminus: Cysteine protease inhibitor 3 (146 aa).

Intrachain disulfides connect C8–C60 and C109–C115.

This sequence belongs to the protease inhibitor I3 (leguminous Kunitz-type inhibitor) family.

It is found in the vacuole. Functionally, inhibitor of cysteine proteases. May protect the plant by inhibiting proteases of invading organisms. This is Cysteine protease inhibitor 3 from Solanum tuberosum (Potato).